Consider the following 218-residue polypeptide: Adenylate kinase (218 aa).

An ATP-binding site is contributed by 11 to 16 (GAGKGT). Positions 31-60 (STGDMFREAMANKTKVGLEAKSYIDKGNLV) are NMP. AMP contacts are provided by residues T32, R37, 58–60 (NLV), 86–89 (GFPR), and Q93. The interval 127–165 (ARYMCKNCGATYNKLSKQPKVEGTCDRCGSHEFYQREDD) is LID. R128 contacts ATP. Positions 131 and 134 each coordinate Zn(2+). 137-138 (TY) contributes to the ATP binding site. Zn(2+) contacts are provided by C151 and C154. AMP contacts are provided by R162 and R173. Q201 serves as a coordination point for ATP.

It belongs to the adenylate kinase family. As to quaternary structure, monomer.

It is found in the cytoplasm. It catalyses the reaction AMP + ATP = 2 ADP. The protein operates within purine metabolism; AMP biosynthesis via salvage pathway; AMP from ADP: step 1/1. Functionally, catalyzes the reversible transfer of the terminal phosphate group between ATP and AMP. Plays an important role in cellular energy homeostasis and in adenine nucleotide metabolism. This chain is Adenylate kinase, found in Lactobacillus helveticus (strain DPC 4571).